Reading from the N-terminus, the 21-residue chain is Fibrinogen beta chain (21 aa).

Position 1 is a pyrrolidone carboxylic acid (glutamine 1). Over residues 1 to 11 (QHSTDYDEEEE) the composition is skewed to acidic residues. The interval 1-21 (QHSTDYDEEEEDRAKLHLDAR) is disordered. O-linked (GalNAc...) threonine glycosylation occurs at threonine 4. At tyrosine 6 the chain carries Sulfotyrosine. The span at 12-21 (DRAKLHLDAR) shows a compositional bias: basic and acidic residues.

Heterohexamer; disulfide linked. Contains 2 sets of 3 non-identical chains (alpha, beta and gamma). The 2 heterotrimers are in head to head conformation with the N-termini in a small central domain. Conversion of fibrinogen to fibrin is triggered by thrombin, which cleaves fibrinopeptides A and B from alpha and beta chains, and thus exposes the N-terminal polymerization sites responsible for the formation of the soft clot.

The protein resides in the secreted. In terms of biological role, cleaved by the protease thrombin to yield monomers which, together with fibrinogen alpha (FGA) and fibrinogen gamma (FGG), polymerize to form an insoluble fibrin matrix. Fibrin has a major function in hemostasis as one of the primary components of blood clots. In addition, functions during the early stages of wound repair to stabilize the lesion and guide cell migration during re-epithelialization. Was originally thought to be essential for platelet aggregation, based on in vitro studies using anticoagulated blood. However subsequent studies have shown that it is not absolutely required for thrombus formation in vivo. Enhances expression of SELP in activated platelets. Maternal fibrinogen is essential for successful pregnancy. Fibrin deposition is also associated with infection, where it protects against IFNG-mediated hemorrhage. May also facilitate the antibacterial immune response via both innate and T-cell mediated pathways. The polypeptide is Fibrinogen beta chain (FGB) (Cervus elaphus (Red deer)).